We begin with the raw amino-acid sequence, 334 residues long: Ribosomal RNA small subunit methyltransferase H (334 aa).

S-adenosyl-L-methionine-binding positions include 39-41 (GGH), Asp-59, Phe-83, Asp-100, and Gln-107. Positions 303-334 (ERTQAHGAERSDMRRAERPDARRAEHGEVLPP) are disordered.

This sequence belongs to the methyltransferase superfamily. RsmH family.

It is found in the cytoplasm. It carries out the reaction cytidine(1402) in 16S rRNA + S-adenosyl-L-methionine = N(4)-methylcytidine(1402) in 16S rRNA + S-adenosyl-L-homocysteine + H(+). Specifically methylates the N4 position of cytidine in position 1402 (C1402) of 16S rRNA. The sequence is that of Ribosomal RNA small subunit methyltransferase H from Verminephrobacter eiseniae (strain EF01-2).